The chain runs to 146 residues: Hemoglobin subunit beta (146 aa).

A Globin domain is found at 2-146 (HWSAEEKQLI…VAHALARKYH (145 aa)). Heme b contacts are provided by His-63 and His-92.

It belongs to the globin family. Heterotetramer of two alpha chains and two beta chains. Red blood cells.

Involved in oxygen transport from the lung to the various peripheral tissues. This Phasianus colchicus colchicus (Black-necked pheasant) protein is Hemoglobin subunit beta (HBB).